A 448-amino-acid chain; its full sequence is Trigger factor (448 aa).

A PPIase FKBP-type domain is found at 167–253; that stretch reads GSIVRVDFVE…VKDIKRRDIP (87 aa).

It belongs to the FKBP-type PPIase family. Tig subfamily.

The protein localises to the cytoplasm. It catalyses the reaction [protein]-peptidylproline (omega=180) = [protein]-peptidylproline (omega=0). Involved in protein export. Acts as a chaperone by maintaining the newly synthesized protein in an open conformation. Functions as a peptidyl-prolyl cis-trans isomerase. The protein is Trigger factor of Borrelia duttonii (strain Ly).